Reading from the N-terminus, the 448-residue chain is Trigger factor (448 aa).

Positions 161 to 246 (GDQVTIDFEG…VHKVAGKQLP (86 aa)) constitute a PPIase FKBP-type domain. The disordered stretch occupies residues 428 to 448 (ALQAAQQQEGAEEEAQEETSA). Acidic residues predominate over residues 437–448 (GAEEEAQEETSA).

The protein belongs to the FKBP-type PPIase family. Tig subfamily.

Its subcellular location is the cytoplasm. The catalysed reaction is [protein]-peptidylproline (omega=180) = [protein]-peptidylproline (omega=0). Its function is as follows. Involved in protein export. Acts as a chaperone by maintaining the newly synthesized protein in an open conformation. Functions as a peptidyl-prolyl cis-trans isomerase. This Chromohalobacter salexigens (strain ATCC BAA-138 / DSM 3043 / CIP 106854 / NCIMB 13768 / 1H11) protein is Trigger factor.